A 240-amino-acid chain; its full sequence is tRNA1(Val) (adenine(37)-N6)-methyltransferase (240 aa).

It belongs to the methyltransferase superfamily. tRNA (adenine-N(6)-)-methyltransferase family.

It localises to the cytoplasm. It catalyses the reaction adenosine(37) in tRNA1(Val) + S-adenosyl-L-methionine = N(6)-methyladenosine(37) in tRNA1(Val) + S-adenosyl-L-homocysteine + H(+). Specifically methylates the adenine in position 37 of tRNA(1)(Val) (anticodon cmo5UAC). In Photobacterium profundum (strain SS9), this protein is tRNA1(Val) (adenine(37)-N6)-methyltransferase.